The following is a 189-amino-acid chain: GTP cyclohydrolase 1 (189 aa).

Zn(2+)-binding residues include Cys-76, His-79, and Cys-149.

This sequence belongs to the GTP cyclohydrolase I family. Homomer.

It catalyses the reaction GTP + H2O = 7,8-dihydroneopterin 3'-triphosphate + formate + H(+). Its pathway is cofactor biosynthesis; 7,8-dihydroneopterin triphosphate biosynthesis; 7,8-dihydroneopterin triphosphate from GTP: step 1/1. In Dehalococcoides mccartyi (strain ATCC BAA-2100 / JCM 16839 / KCTC 5957 / BAV1), this protein is GTP cyclohydrolase 1.